A 195-amino-acid chain; its full sequence is Imidazoleglycerol-phosphate dehydratase (195 aa).

Belongs to the imidazoleglycerol-phosphate dehydratase family.

It localises to the cytoplasm. The catalysed reaction is D-erythro-1-(imidazol-4-yl)glycerol 3-phosphate = 3-(imidazol-4-yl)-2-oxopropyl phosphate + H2O. The protein operates within amino-acid biosynthesis; L-histidine biosynthesis; L-histidine from 5-phospho-alpha-D-ribose 1-diphosphate: step 6/9. The polypeptide is Imidazoleglycerol-phosphate dehydratase (Thermotoga maritima (strain ATCC 43589 / DSM 3109 / JCM 10099 / NBRC 100826 / MSB8)).